The primary structure comprises 257 residues: MSDIYQHFRKDERAFIDQALEWKRIVQEQYRMKLTDFLDPREQVILSAVTGQADVGLAFSGGYDRAERKRAILFPEYITPEESDFELQAFNVRYADKFVSVDHRSLLGALMGIGLKRQKFGDIVFSETAVQLIVSADTADFVAAQLTQAGKAAVSLEKIDLSDLNIPAVDVEIRDDTVSSLRLDAVCASMSRQSRQKSQTLVKNGLVKVNWKVVEDPSYIVAEGDMLSIRGFGRCSLTKIEGKTKKDKWRVTFERQK.

Residues Met-1–Phe-74 are N-terminal domain. The tract at residues Leu-87 to Ile-166 is central region. The region spanning Leu-181 to Val-251 is the S4 RNA-binding domain.

As to quaternary structure, in the presence of chloramphenicol (a translation elongation inhibitor), but not erythromycin or lincomycin, associates with 50S ribosomal subunits with or without a tRNA in the P-site. The S4 domain binds in a similar position to RqcP.

The protein resides in the cytoplasm. In terms of biological role, part of the ribosome quality control system (RQC), a ribosome-associated complex that mediates the extraction of incompletely synthesized nascent chains from stalled ribosomes and their subsequent degradation. RqcH recruits Ala-charged tRNA, and with RqcP directs the elongation of stalled nascent chains on 50S ribosomal subunits, leading to non-templated C-terminal alanine extensions (Ala tail). The Ala tail promotes nascent chain degradation. RqcP2 (YlmH) overexpression can compensate for RqcP's role in Ala tailing during RQC, restoring Ala tail addition to peptides in stalled ribosomes. Overexpression complements a double ssrA-rqcP double deletion, but not an ssrA-rqcH double deletion. Its function is as follows. The majority of tagged protein is associated with tRNA-less 50S subunits, suggesting it might also play a role in late stage 50S subunit biogenesis. This chain is Ribosome-associated protein quality control protein P2, found in Bacillus subtilis (strain 168).